A 100-amino-acid polypeptide reads, in one-letter code: Large ribosomal subunit protein uL23 (100 aa).

The protein belongs to the universal ribosomal protein uL23 family. In terms of assembly, part of the 50S ribosomal subunit. Contacts protein L29, and trigger factor when it is bound to the ribosome.

One of the early assembly proteins it binds 23S rRNA. One of the proteins that surrounds the polypeptide exit tunnel on the outside of the ribosome. Forms the main docking site for trigger factor binding to the ribosome. The chain is Large ribosomal subunit protein uL23 from Shewanella denitrificans (strain OS217 / ATCC BAA-1090 / DSM 15013).